The primary structure comprises 146 residues: Small RNA-binding protein 11, chloroplastic (146 aa).

A chloroplast-targeting transit peptide spans 1-31 (MAALARIGGRHLKSVCLINSSASCFFTQRRG). Residues 34-112 (SKLFIGGLSF…RTIFVDYAKA (79 aa)) form the RRM domain. A Phosphoserine modification is found at Ser42.

Expressed in rosette leaves, cauline leaves, stems and flowers.

The protein resides in the plastid. It localises to the chloroplast. In terms of biological role, probable RNA-binding protein that may be involved in salt and oxidative stress tolerance. The polypeptide is Small RNA-binding protein 11, chloroplastic (Arabidopsis thaliana (Mouse-ear cress)).